The primary structure comprises 512 residues: Paraspeckle component 1 (512 aa).

Composition is skewed to polar residues over residues 1–29 (MANP…STES) and 46–55 (DPSSANSEPQ). Residues 1–56 (MANPNLKQVNIQNNATFPHQQNVTRSTESPGDPKETMEAVAPSPQDPSSANSEPQE) are disordered. RRM domains are found at residues 76-148 (CRLF…FATH) and 150-231 (AALT…PTEQ). Residues 276-366 (LDEMDKQQRE…MIRHREQLDI (91 aa)) adopt a coiled-coil conformation. A disordered region spans residues 451–512 (GPLQMGSPVG…DGPNNKRRRY (62 aa)). A compositionally biased stretch (polar residues) spans 464-474 (GVDSPQPQQHS). Residues 488–502 (GQSGFGRGSPVGGSF) show a composition bias toward gly residues.

The protein belongs to the PSPC family.

The protein localises to the nucleus speckle. In terms of biological role, RNA-binding protein required for the formation of nuclear paraspeckles. Binds to poly(A), poly(G) and poly(U) RNA homopolymers. This chain is Paraspeckle component 1 (pspc1), found in Danio rerio (Zebrafish).